Consider the following 497-residue polypeptide: Probable cytosol aminopeptidase (497 aa).

Mn(2+) is bound by residues lysine 263 and aspartate 268. Residue lysine 275 is part of the active site. Residues aspartate 286, aspartate 345, and glutamate 347 each coordinate Mn(2+). Residue arginine 349 is part of the active site.

It belongs to the peptidase M17 family. It depends on Mn(2+) as a cofactor.

Its subcellular location is the cytoplasm. It carries out the reaction Release of an N-terminal amino acid, Xaa-|-Yaa-, in which Xaa is preferably Leu, but may be other amino acids including Pro although not Arg or Lys, and Yaa may be Pro. Amino acid amides and methyl esters are also readily hydrolyzed, but rates on arylamides are exceedingly low.. It catalyses the reaction Release of an N-terminal amino acid, preferentially leucine, but not glutamic or aspartic acids.. Its function is as follows. Presumably involved in the processing and regular turnover of intracellular proteins. Catalyzes the removal of unsubstituted N-terminal amino acids from various peptides. This chain is Probable cytosol aminopeptidase, found in Brucella suis biovar 1 (strain 1330).